A 57-amino-acid chain; its full sequence is UPF0391 membrane protein RPC_2356 (57 aa).

2 consecutive transmembrane segments (helical) span residues 6–26 (WALI…TGIS) and 35–55 (ILFY…LTIF).

Belongs to the UPF0391 family.

It localises to the cell membrane. This Rhodopseudomonas palustris (strain BisB18) protein is UPF0391 membrane protein RPC_2356.